Reading from the N-terminus, the 454-residue chain is UPF0210 protein BLA_0552 (454 aa).

This sequence belongs to the UPF0210 family. As to quaternary structure, homodimer.

This chain is UPF0210 protein BLA_0552, found in Bifidobacterium animalis subsp. lactis (strain AD011).